The primary structure comprises 436 residues: uncharacterized protein (436 aa).

The signal sequence occupies residues 1 to 18; it reads MMKRFVALSMAIFSLSFA.

This is an uncharacterized protein from Aquifex aeolicus (strain VF5).